The sequence spans 735 residues: Zinc finger CCCH domain-containing protein 14 (735 aa).

Met1 bears the N-acetylmethionine mark. Residues 78–153 (TEPSSLKSPD…RHSYDDGAST (76 aa)) form a disordered region. The residue at position 85 (Ser85) is a Phosphoserine. Glycyl lysine isopeptide (Lys-Gly) (interchain with G-Cter in SUMO2) cross-links involve residues Lys99, Lys139, Lys175, and Lys198. Over residues 131–144 (VSTSSQEQKSTNVR) the composition is skewed to polar residues. Ser240 is subject to Phosphoserine. Residues Lys245, Lys283, and Lys295 each participate in a glycyl lysine isopeptide (Lys-Gly) (interchain with G-Cter in SUMO2) cross-link. Residues 308 to 351 (FSHDGEEEEEDEDYGTRIGSLSSSVSVPAKPERRPSLPPSKQAN) form a disordered region. Residues Ser309, Ser327, and Ser343 each carry the phosphoserine modification. The residue at position 357 (Lys357) is an N6-acetyllysine; alternate. Lys357 is covalently cross-linked (Glycyl lysine isopeptide (Lys-Gly) (interchain with G-Cter in SUMO2); alternate). Residue Lys378 forms a Glycyl lysine isopeptide (Lys-Gly) (interchain with G-Cter in SUMO2) linkage. Ser390 and Ser409 each carry phosphoserine. Residues 399–431 (VQGQNRAPRISPPVKEEEAKGDNTGKSQGTQQR) are disordered. A compositionally biased stretch (basic and acidic residues) spans 412 to 421 (VKEEEAKGDN). A Glycyl lysine isopeptide (Lys-Gly) (interchain with G-Cter in SUMO2) cross-link involves residue Lys413. Residues 422-431 (TGKSQGTQQR) show a composition bias toward polar residues. A Glycyl lysine isopeptide (Lys-Gly) (interchain with G-Cter in SUMO2) cross-link involves residue Lys489. 4 positions are modified to phosphoserine: Ser498, Ser515, Ser527, and Ser620. 5 consecutive C3H1-type zinc fingers follow at residues 595–620 (EKLL…HPIS), 621–640 (PCKA…VHPN), 641–656 (CKYD…PFTH), 681–698 (CRYF…YHPK), and 700–718 (CRFN…HPTI).

It belongs to the ZC3H14 family. As to quaternary structure, homodimer; facilitating circular RNAs (circRNAs) formation. Associates with the spliceosome. Interacts with HOOK2. Interacts with ZFC3H1 in a RNase-sensitive manner. In terms of tissue distribution, expressed in hippocampal pyramidal neurons (at protein level). Expressed in kidney, liver, muscle, heart brain and testes. Expressed in hippocampal pyramidal neurons.

It is found in the nucleus speckle. In terms of biological role, RNA-binding protein involved in the biogenesis of circular RNAs (circRNAs), which are produced by back-splicing circularization of pre-mRNAs. Acts by binding to both exon-intron boundary and 3'-UTR of pre-mRNAs to promote circRNA biogenesis through dimerization and the association with the spliceosome. Required for spermatogenesis via involvement in circRNA biogenesis. Regulates the pre-mRNA processing of ATP5MC1; preventing its degradation. Also binds the poly(A) tail of mRNAs; controlling poly(A) length in neuronal cells. In Mus musculus (Mouse), this protein is Zinc finger CCCH domain-containing protein 14.